We begin with the raw amino-acid sequence, 236 residues long: Ribose-5-phosphate isomerase A (236 aa).

Substrate is bound by residues 33-36 (TGST), 90-93 (DGAD), and 103-106 (KGGG). Glu-112 serves as the catalytic Proton acceptor. Position 130 (Lys-130) interacts with substrate.

Belongs to the ribose 5-phosphate isomerase family. In terms of assembly, homodimer.

It carries out the reaction aldehydo-D-ribose 5-phosphate = D-ribulose 5-phosphate. The protein operates within carbohydrate degradation; pentose phosphate pathway; D-ribose 5-phosphate from D-ribulose 5-phosphate (non-oxidative stage): step 1/1. Functionally, catalyzes the reversible conversion of ribose-5-phosphate to ribulose 5-phosphate. This chain is Ribose-5-phosphate isomerase A, found in Nostoc sp. (strain PCC 7120 / SAG 25.82 / UTEX 2576).